Reading from the N-terminus, the 230-residue chain is uncharacterized protein (230 aa).

Residues 93 to 115 (VFLYYFLIVYTSGNVDLISRFLF) form a helical membrane-spanning segment.

The protein belongs to the DUP/COS family.

The protein resides in the membrane. This is an uncharacterized protein from Saccharomyces cerevisiae (strain ATCC 204508 / S288c) (Baker's yeast).